The chain runs to 911 residues: Brevican core protein (911 aa).

Positions 1–22 (MAQLFLPLLAALVLAQAPAALA) are cleaved as a signal peptide. Residues 36 to 155 (RVRIAGDAPL…SSDAVEVKVK (120 aa)) form the Ig-like V-type domain. Disulfide bonds link Cys57/Cys137, Cys179/Cys250, Cys203/Cys224, Cys277/Cys352, and Cys301/Cys322. Asn130 carries an N-linked (GlcNAc...) asparagine glycan. Link domains follow at residues 157 to 252 (VVFL…YCYA) and 257 to 354 (GELF…YCFR). Asn337 is a glycosylation site (N-linked (GlcNAc...) asparagine). A disordered region spans residues 391-641 (QLPQEATESE…PTDSASRGGV (251 aa)). A Phosphoserine modification is found at Ser418. Ser418 carries O-linked (Xyl...) (chondroitin sulfate) serine glycosylation. Over residues 454–478 (EEEEKYEDEEEKEEEEEEEEVEDEA) the composition is skewed to acidic residues. O-glycosylated at two sites stretches follow at residues 520-530 (SPLPDGESEAS) and 540-545 (TETLPT). An O-glycosylated at one site region spans residues 569–575 (TGGPELS). The span at 612–627 (EDNSGRTAPAGTSVQA) shows a compositional bias: polar residues. A lipid anchor (GPI-anchor amidated alanine) is attached at Ala646. Positions 646–682 (ASGDCVPSPCHNGGTCLEEEEGVRCLCLPGYGGDLCD) constitute an EGF-like domain. 8 cysteine pairs are disulfide-bonded: Cys650/Cys661, Cys655/Cys670, Cys672/Cys681, Cys688/Cys699, Cys716/Cys808, Cys784/Cys800, Cys815/Cys858, and Cys844/Cys871. One can recognise a C-type lectin domain in the interval 695–809 (FQGACYKHFS…CNYHLSYTCK (115 aa)). Positions 813-873 (VSCGPPPELP…WEAPQISCVP (61 aa)) constitute a Sushi domain. O-linked (GalNAc...) serine glycosylation is found at Ser905 and Ser906.

It belongs to the aggrecan/versican proteoglycan family. Interacts with TNR. In terms of processing, O-glycosylated; contains chondroitin sulfate. O-glycosylated with a core 1 or possibly core 8 glycan. As to expression, expressed in the retina, specifically in the inner nuclear layer, inner plexiform layer and ganglion cell layer (at protein level). Detected in cerebrospinal fluid (at protein level). Detected in urine (at protein level).

The protein localises to the secreted. It localises to the extracellular space. The protein resides in the extracellular matrix. It is found in the membrane. In terms of biological role, may play a role in the terminally differentiating and the adult nervous system during postnatal development. Could stabilize interactions between hyaluronan (HA) and brain proteoglycans. This Homo sapiens (Human) protein is Brevican core protein (BCAN).